The chain runs to 144 residues: Large ribosomal subunit protein uL15 (144 aa).

The interval 1–48 is disordered; the sequence is MIKLESLQDPSPRKRRTKLLGRGPSSGHGKTSCRGHKGDGSRSGYKRR.

It belongs to the universal ribosomal protein uL15 family. In terms of assembly, part of the 50S ribosomal subunit.

Its function is as follows. Binds to the 23S rRNA. The chain is Large ribosomal subunit protein uL15 from Chlamydia caviae (strain ATCC VR-813 / DSM 19441 / 03DC25 / GPIC) (Chlamydophila caviae).